A 205-amino-acid chain; its full sequence is S-crystallin SL11 (205 aa).

The GST N-terminal domain occupies 2–80; it reads PSYTLYYFNG…YLAREFGFYG (79 aa). The region spanning 82–205 is the GST C-terminal domain; the sequence is NNMDMFKVDC…YIKKRNNTAF (124 aa).

It belongs to the GST superfamily. In terms of tissue distribution, lens.

S-crystallins are structural components of squids and octopi eye lens. Contains relatively little if any GST activity. In Nototodarus sloanii (Wellington flying squid), this protein is S-crystallin SL11.